The primary structure comprises 260 residues: Pyridoxine 5'-phosphate synthase (260 aa).

Residue Asn15 participates in 3-amino-2-oxopropyl phosphate binding. Position 17-18 (Asp17–His18) interacts with 1-deoxy-D-xylulose 5-phosphate. Residue Arg26 participates in 3-amino-2-oxopropyl phosphate binding. His51 serves as the catalytic Proton acceptor. 1-deoxy-D-xylulose 5-phosphate contacts are provided by Arg53 and His58. Glu78 functions as the Proton acceptor in the catalytic mechanism. Position 108 (Thr108) interacts with 1-deoxy-D-xylulose 5-phosphate. Residue His199 is the Proton donor of the active site. 3-amino-2-oxopropyl phosphate contacts are provided by residues Gly200 and Gly221–His222.

It belongs to the PNP synthase family. As to quaternary structure, homooctamer; tetramer of dimers.

It localises to the cytoplasm. It catalyses the reaction 3-amino-2-oxopropyl phosphate + 1-deoxy-D-xylulose 5-phosphate = pyridoxine 5'-phosphate + phosphate + 2 H2O + H(+). Its pathway is cofactor biosynthesis; pyridoxine 5'-phosphate biosynthesis; pyridoxine 5'-phosphate from D-erythrose 4-phosphate: step 5/5. Catalyzes the complicated ring closure reaction between the two acyclic compounds 1-deoxy-D-xylulose-5-phosphate (DXP) and 3-amino-2-oxopropyl phosphate (1-amino-acetone-3-phosphate or AAP) to form pyridoxine 5'-phosphate (PNP) and inorganic phosphate. This chain is Pyridoxine 5'-phosphate synthase, found in Cupriavidus pinatubonensis (strain JMP 134 / LMG 1197) (Cupriavidus necator (strain JMP 134)).